We begin with the raw amino-acid sequence, 37 residues long: Large ribosomal subunit protein bL36 (37 aa).

The protein belongs to the bacterial ribosomal protein bL36 family.

This is Large ribosomal subunit protein bL36 from Synechococcus sp. (strain CC9311).